A 242-amino-acid polypeptide reads, in one-letter code: Anthranilate phosphoribosyltransferase (242 aa).

5-phospho-alpha-D-ribose 1-diphosphate-binding positions include glycine 79, 82-83, threonine 87, 89-92, 107-115, and serine 119; these read GD, NVST, and KHGNRAVSS. Glycine 79 contributes to the anthranilate binding site. Residue serine 91 participates in Mg(2+) binding. Asparagine 110 contacts anthranilate. Position 165 (arginine 165) interacts with anthranilate. Residues aspartate 224 and glutamate 225 each contribute to the Mg(2+) site.

The protein belongs to the anthranilate phosphoribosyltransferase family. As to quaternary structure, homodimer. Mg(2+) serves as cofactor.

It catalyses the reaction N-(5-phospho-beta-D-ribosyl)anthranilate + diphosphate = 5-phospho-alpha-D-ribose 1-diphosphate + anthranilate. It participates in amino-acid biosynthesis; L-tryptophan biosynthesis; L-tryptophan from chorismate: step 2/5. In terms of biological role, catalyzes the transfer of the phosphoribosyl group of 5-phosphorylribose-1-pyrophosphate (PRPP) to anthranilate to yield N-(5'-phosphoribosyl)-anthranilate (PRA). In Bacillus caldotenax, this protein is Anthranilate phosphoribosyltransferase (trpD).